The following is a 566-amino-acid chain: Arginine--tRNA ligase (566 aa).

The short motif at 129–139 (ANPTGPLHIGH) is the 'HIGH' region element.

The protein belongs to the class-I aminoacyl-tRNA synthetase family. As to quaternary structure, monomer.

It localises to the cytoplasm. It catalyses the reaction tRNA(Arg) + L-arginine + ATP = L-arginyl-tRNA(Arg) + AMP + diphosphate. This is Arginine--tRNA ligase from Wolbachia pipientis subsp. Culex pipiens (strain wPip).